The sequence spans 296 residues: NAD kinase (296 aa).

The active-site Proton acceptor is the Asp72. NAD(+) is bound by residues 72 to 73, 146 to 147, Arg157, Lys174, Asp176, 187 to 192, and Gln247; these read DG, ND, and TAYALS.

This sequence belongs to the NAD kinase family. The cofactor is a divalent metal cation.

It localises to the cytoplasm. The enzyme catalyses NAD(+) + ATP = ADP + NADP(+) + H(+). In terms of biological role, involved in the regulation of the intracellular balance of NAD and NADP, and is a key enzyme in the biosynthesis of NADP. Catalyzes specifically the phosphorylation on 2'-hydroxyl of the adenosine moiety of NAD to yield NADP. This is NAD kinase from Pseudomonas putida (strain ATCC 700007 / DSM 6899 / JCM 31910 / BCRC 17059 / LMG 24140 / F1).